A 235-amino-acid polypeptide reads, in one-letter code: Glucosamine-6-phosphate deaminase (235 aa).

Residue aspartate 62 is the Proton acceptor; for enolization step of the active site. Asparagine 128 functions as the For ring-opening step in the catalytic mechanism. The active-site Proton acceptor; for ring-opening step is histidine 130. The For ring-opening step role is filled by glutamate 135.

This sequence belongs to the glucosamine/galactosamine-6-phosphate isomerase family. NagB subfamily.

The catalysed reaction is alpha-D-glucosamine 6-phosphate + H2O = beta-D-fructose 6-phosphate + NH4(+). The protein operates within amino-sugar metabolism; N-acetylneuraminate degradation; D-fructose 6-phosphate from N-acetylneuraminate: step 5/5. In terms of biological role, catalyzes the reversible isomerization-deamination of glucosamine 6-phosphate (GlcN6P) to form fructose 6-phosphate (Fru6P) and ammonium ion. This chain is Glucosamine-6-phosphate deaminase, found in Streptococcus pneumoniae serotype 2 (strain D39 / NCTC 7466).